The primary structure comprises 215 residues: Ras-related protein Rab-5A (215 aa).

10 residues coordinate GTP: Ser29, Ala30, Gly32, Lys33, Ser34, Ser35, His46, Glu47, Thr52, and Gly78. Ser34 serves as a coordination point for Mg(2+). 2 consecutive short sequence motifs (switch) follow at residues 44 to 56 (QFHE…IGAA) and 77 to 93 (AGQE…YRGA). A Mg(2+)-binding site is contributed by Thr52. Ser84 carries the phosphoserine modification. 5 residues coordinate GTP: Asn133, Lys134, Asp136, Ala164, and Lys165. The disordered stretch occupies residues 181 to 215 (LPKNEPQNPGANSARGRGVDLTEPAQPARSQCCSN). Residues Cys212 and Cys213 are each lipidated (S-geranylgeranyl cysteine).

This sequence belongs to the small GTPase superfamily. Rab family. As to quaternary structure, interacts with GDI1; this promotes dissociation from membranes; phosphorylation at Ser-84 disrupts this interaction. Interacts with GDI2; phosphorylation at Ser-84 disrupts the interaction. Interacts with EEA1. Interacts with RIN1 and GAPVD1, which regulate its pathway, probably by acting as a GEF. Interacts with ALS2CL, SUN2, ZFYVE20 and RUFY1. Interacts with RABEP1; one RABEP1 homodimer binds two RAB5A chains, but at opposite sides of the dimer. Interacts with SGSM1, SGSM3 and PIK3CB. Interacts with RINL. May be a component of a complex composed of RAB5A, DYN2 and PIK3C3. Does not interact with the BLOC-3 complex (heterodimer of HPS1 and HPS4). Interacts with CLN5. Interacts with APPL2. Interacts with F8A1/F8A2/F8A3. Found in a complex with F8A1/F8A2/F8A3, HTT and RAB5A; mediates the recruitment of HTT by RAB5A onto early endosomes. Interacts with ATP9A. Interacts with PPP1R21; mediates the recruitment of FERRY complex by RAB5A onto early endosomes. Mg(2+) serves as cofactor. Post-translationally, phosphorylation of Ser-84 in the switch II region by LRRK2 prevents the association of RAB regulatory proteins, including RAB GDP dissociation inhibitors GDI1 and GDI2.

The protein localises to the cell membrane. It is found in the early endosome membrane. It localises to the melanosome. The protein resides in the cytoplasmic vesicle. Its subcellular location is the cell projection. The protein localises to the ruffle. It is found in the membrane. It localises to the cytoplasm. The protein resides in the cytosol. Its subcellular location is the phagosome membrane. The protein localises to the endosome membrane. It carries out the reaction GTP + H2O = GDP + phosphate + H(+). Its activity is regulated as follows. Regulated by guanine nucleotide exchange factors (GEFs) including RINL, which promote the exchange of bound GDP for free GTP. Regulated by GTPase activating proteins (GAPs) which increase the GTP hydrolysis activity. Inhibited by GDP dissociation inhibitors (GDIs). Functionally, the small GTPases Rab are key regulators of intracellular membrane trafficking, from the formation of transport vesicles to their fusion with membranes. Rabs cycle between an inactive GDP-bound form and an active GTP-bound form that is able to recruit to membranes different sets of downstream effectors directly responsible for vesicle formation, movement, tethering and fusion. RAB5A is required for the fusion of plasma membranes and early endosomes. Contributes to the regulation of filopodia extension. Required for the exosomal release of SDCBP, CD63, PDCD6IP and syndecan. Regulates maturation of apoptotic cell-containing phagosomes, probably downstream of DYN2 and PIK3C3. In Rattus norvegicus (Rat), this protein is Ras-related protein Rab-5A.